We begin with the raw amino-acid sequence, 780 residues long: Endonuclease MutS2 (780 aa).

Position 334–341 (334–341) interacts with ATP; it reads GPNAGGKT. Positions 706–780 constitute a Smr domain; the sequence is IDIRGMRSVD…GGSGKTIVEI (75 aa).

The protein belongs to the DNA mismatch repair MutS family. MutS2 subfamily. As to quaternary structure, homodimer. Binds to stalled ribosomes, contacting rRNA.

Endonuclease that is involved in the suppression of homologous recombination and thus may have a key role in the control of bacterial genetic diversity. Its function is as follows. Acts as a ribosome collision sensor, splitting the ribosome into its 2 subunits. Detects stalled/collided 70S ribosomes which it binds and splits by an ATP-hydrolysis driven conformational change. Acts upstream of the ribosome quality control system (RQC), a ribosome-associated complex that mediates the extraction of incompletely synthesized nascent chains from stalled ribosomes and their subsequent degradation. Probably generates substrates for RQC. The protein is Endonuclease MutS2 of Borreliella burgdorferi (strain ATCC 35210 / DSM 4680 / CIP 102532 / B31) (Borrelia burgdorferi).